Reading from the N-terminus, the 306-residue chain is Nucleotide-binding protein amb4396 (306 aa).

Residues 1–14 (MSDLHSSPTDQTSA) show a composition bias toward polar residues. The tract at residues 1 to 20 (MSDLHSSPTDQTSAPAHAGG) is disordered. An ATP-binding site is contributed by 29–36 (GMSGAGKT). Residue 77-80 (DIRT) participates in GTP binding.

The protein belongs to the RapZ-like family.

In terms of biological role, displays ATPase and GTPase activities. In Paramagnetospirillum magneticum (strain ATCC 700264 / AMB-1) (Magnetospirillum magneticum), this protein is Nucleotide-binding protein amb4396.